The following is a 304-amino-acid chain: 5-hmdU DNA kinase 2 (304 aa).

A disordered region spans residues 260-304; that stretch reads VGGQDPLAHRVPEKPQKASKTKNKAVAKEEPKTSSVSLLGLMRKA. A compositionally biased stretch (basic and acidic residues) spans 266–275; it reads LAHRVPEKPQ.

The protein belongs to the thymidylate kinase family. 5-hmdU DNA kinase subfamily.

It catalyses the reaction 5-hydroxymethyl-dUMP in DNA + ATP = 5-phosphomethyl-dUMP in DNA + ADP + H(+). In terms of biological role, phosphorylates 5-hydroxymethyluracil (5hmdU) into 5-phosphomethyl-2'-deoxyuridine (5- PmdU) on DNA as a step in the pathway leading to thymidine hypermodifications in the viral genome. The phosphate is added internally to the DNA polymer. As a final result of the pathway of hypermodification, 5-aminoethoxy-2'-deoxymethyluridine (5-NeOmdU) substitutes for about 40% of the thymidines in the viral DNA. These modifications probably prevent degradation of viral genome by the host restriction-modification antiviral defense system. The sequence is that of 5-hmdU DNA kinase 2 from Salmonella typhi.